Consider the following 436-residue polypeptide: Sulfopropanediol 3-dehydrogenase (436 aa).

3 residues coordinate NAD(+): Tyr-118, Gln-180, and Asn-203. The Zn(2+) site is built by Gln-248 and His-251. Active-site proton acceptor residues include Glu-318 and His-319. 2 residues coordinate Zn(2+): Asp-352 and His-411.

This sequence belongs to the histidinol dehydrogenase family. HpsN subfamily. Requires Zn(2+) as cofactor.

It catalyses the reaction (2R)-3-sulfopropanediol + 2 NAD(+) + H2O = (2R)-3-sulfolactate + 2 NADH + 3 H(+). Functionally, catalyzes the NAD-dependent oxidation of (R)-2,3-dihydroxypropane-1-sulfonate to (R)-3-sulfolactate. This is Sulfopropanediol 3-dehydrogenase from Cupriavidus pinatubonensis (strain JMP 134 / LMG 1197) (Cupriavidus necator (strain JMP 134)).